The following is a 282-amino-acid chain: MTLKKLNPITPGSRHRVIIDYSKQSKLLKPSTKNAPLKKNTLKIMTTEGRNFHGVITTRHRGGGHKRLYRIIEFNRNKLGVSGKVNNIEYDPNRTANIARIHYQDGSKKYIIHPEGLEKGANIIASAIAPLSIGNSLPLKSIPIGTEIHNIEFHPGKGGQLARSAGTGALVSYKTNSFVTLKLPSGRSRYFDNKCWATIGKVSKAEHKFINLGKAGRSRWLGIRPTVRGSAQNAVDHPHGGGEGKAPIGRIPSTPWGKPALGIKTRHRHKWSERFFKGLKKK.

Residues 230 to 261 (SAQNAVDHPHGGGEGKAPIGRIPSTPWGKPAL) are disordered.

The protein belongs to the universal ribosomal protein uL2 family. As to quaternary structure, part of the 50S ribosomal subunit.

Its subcellular location is the plastid. This chain is Large ribosomal subunit protein uL2c (rpl2), found in Helicosporidium sp. subsp. Simulium jonesii (Green alga).